The primary structure comprises 429 residues: Serum response factor-binding protein 1 (429 aa).

Alanine 2 is subject to N-acetylalanine. Coiled coils occupy residues 42 to 67 (KGTE…AMKE) and 108 to 146 (LLKK…NHSE). 2 disordered regions span residues 131–157 (AEVE…NGSN) and 176–429 (LAKK…TFDD). A compositionally biased stretch (polar residues) spans 146 to 157 (ENTLYSNDNGSN). A compositionally biased stretch (basic and acidic residues) spans 183–195 (NSKEKIAKMEHGP). A Glycyl lysine isopeptide (Lys-Gly) (interchain with G-Cter in SUMO2) cross-link involves residue lysine 190. Phosphoserine occurs at positions 203, 205, 264, 279, and 281. The segment covering 249–265 (GGEEFCEEEKEYFDDST) has biased composition (acidic residues). Positions 296-341 (KESSCHSSVKEQKPLEKVFLKEDTGETHGDTRNDKIKPSTETRKLE) are enriched in basic and acidic residues. Residue lysine 316 forms a Glycyl lysine isopeptide (Lys-Gly) (interchain with G-Cter in SUMO2) linkage. Serine 349, serine 351, and serine 367 each carry phosphoserine. Basic and acidic residues predominate over residues 357-367 (NFKEQAPKTRS). Residues 373-383 (NEPQIKNQFNK) show a composition bias toward polar residues.

Interacts with SRF. Forms complexes with SRF and SRF cofactors ARID2, MYOCD and NKX2-5. Interacts with the N-terminus of SLC2A4. As to expression, abundantly expressed in heart and skeletal muscle, and at much lower levels in brain and lung.

It is found in the cytoplasm. The protein localises to the perinuclear region. Functionally, may be involved in regulating transcriptional activation of cardiac genes during the aging process. May play a role in biosynthesis and/or processing of SLC2A4 in adipose cells. The chain is Serum response factor-binding protein 1 from Homo sapiens (Human).